The sequence spans 207 residues: Minor capsid protein P11 (207 aa).

The interval 7 to 23 is hydrophobic; that stretch reads VKVVAILAVLFLVYKLW. Residues 63–82 form a disordered region; sequence ETDAEDDDIYTGETDDMYDG.

As to quaternary structure, interacts with the major capsid protein.

It localises to the virion. Its function is as follows. One of the minor capsid proteins that constitute a network internal to the major capsid proteins and outside the lipid membrane. The minor capsid proteins glue and stabilize the capsomers. the p11 zip protein binds together the neighboring symmetrons. This Paramecium bursaria Chlorella virus 1 (PBCV-1) protein is Minor capsid protein P11.